The following is a 764-amino-acid chain: 5-methyltetrahydropteroyltriglutamate--homocysteine methyltransferase (764 aa).

5-methyltetrahydropteroyltri-L-glutamate is bound by residues 17–20 and Lys-117; that span reads RELK. L-homocysteine-binding positions include 436–438 and Glu-489; that span reads IGS. L-methionine contacts are provided by residues 436–438 and Glu-489; that span reads IGS. 5-methyltetrahydropteroyltri-L-glutamate-binding positions include 520–521 and Trp-566; that span reads RC. Asp-604 serves as a coordination point for L-homocysteine. Asp-604 contacts L-methionine. Glu-610 is a binding site for 5-methyltetrahydropteroyltri-L-glutamate. His-646, Cys-648, and Glu-670 together coordinate Zn(2+). Catalysis depends on His-699, which acts as the Proton donor. Residue Cys-731 participates in Zn(2+) binding.

Belongs to the vitamin-B12 independent methionine synthase family. The cofactor is Zn(2+).

It catalyses the reaction 5-methyltetrahydropteroyltri-L-glutamate + L-homocysteine = tetrahydropteroyltri-L-glutamate + L-methionine. It participates in amino-acid biosynthesis; L-methionine biosynthesis via de novo pathway; L-methionine from L-homocysteine (MetE route): step 1/1. Functionally, catalyzes the transfer of a methyl group from 5-methyltetrahydrofolate to homocysteine resulting in methionine formation. This chain is 5-methyltetrahydropteroyltriglutamate--homocysteine methyltransferase, found in Baumannia cicadellinicola subsp. Homalodisca coagulata.